A 283-amino-acid polypeptide reads, in one-letter code: Homeobox protein BarH-like 2 (283 aa).

Disordered stretches follow at residues 107–141 (AAAA…RRSR) and 198–283 (KGGQ…PPLS). The segment covering 122 to 132 (SSESETEQPTP) has biased composition (polar residues). Positions 139–198 (RSRTIFTELQLMGLEKKFQKQKYLSTPDRLDLAQSLGLTQLQVKTWYQNRRMKWKKMVLK) form a DNA-binding region, homeobox. Low complexity predominate over residues 268–277 (QPQELSEASS).

It belongs to the BAR homeobox family. Nervous system, particularly in the telencephalon, spinal cord, and dorsal root ganglia.

The protein localises to the nucleus. Transcription factor. Binds optimally to the DNA consensus sequence 5'-YYTAATGRTTTTY-3'. May control the expression of neural adhesion molecules such as L1 or Ng-CAM during embryonic development of both the central and peripherical nervous system. May be involved in controlling adhesive processes in keratinizing epithelia. The polypeptide is Homeobox protein BarH-like 2 (Barx2) (Mus musculus (Mouse)).